A 289-amino-acid polypeptide reads, in one-letter code: ATP synthase gamma chain (289 aa).

The protein belongs to the ATPase gamma chain family. F-type ATPases have 2 components, CF(1) - the catalytic core - and CF(0) - the membrane proton channel. CF(1) has five subunits: alpha(3), beta(3), gamma(1), delta(1), epsilon(1). CF(0) has three main subunits: a, b and c.

Its subcellular location is the cell inner membrane. Its function is as follows. Produces ATP from ADP in the presence of a proton gradient across the membrane. The gamma chain is believed to be important in regulating ATPase activity and the flow of protons through the CF(0) complex. This Aromatoleum aromaticum (strain DSM 19018 / LMG 30748 / EbN1) (Azoarcus sp. (strain EbN1)) protein is ATP synthase gamma chain.